We begin with the raw amino-acid sequence, 117 residues long: Large ribosomal subunit protein bL20 (117 aa).

The protein belongs to the bacterial ribosomal protein bL20 family.

Functionally, binds directly to 23S ribosomal RNA and is necessary for the in vitro assembly process of the 50S ribosomal subunit. It is not involved in the protein synthesizing functions of that subunit. The protein is Large ribosomal subunit protein bL20 of Oleidesulfovibrio alaskensis (strain ATCC BAA-1058 / DSM 17464 / G20) (Desulfovibrio alaskensis).